We begin with the raw amino-acid sequence, 316 residues long: Peroxisomal targeting signal 2 receptor (316 aa).

6 WD repeats span residues 56 to 96 (DTRD…GGRP), 102 to 142 (EHTK…SLKT), 145 to 185 (EHRY…SLNT), 188 to 228 (AHDH…RPTT), 232 to 272 (GHTY…DPII), and 277 to 316 (HHTE…GQFR).

Belongs to the WD repeat peroxin-7 family. Interacts with PEX5; interaction only takes place when PEX7 is associated with cargo proteins.

Its subcellular location is the cytoplasm. The protein resides in the cytosol. The protein localises to the peroxisome matrix. In terms of biological role, receptor required for the peroxisomal import of proteins containing a C-terminal PTS2-type peroxisomal targeting signal. Specifically binds to cargo proteins containing a PTS2 peroxisomal targeting signal in the cytosol. Cargo protein-binding triggers interaction with PEX5 and formation of a ternary complex composed of PEX5 and PEX7 along with PTS2-containing cargo proteins, which is tranlocated into peroxisomes by passing through the PEX13-PEX14 docking complex. The protein is Peroxisomal targeting signal 2 receptor (pex7) of Dictyostelium discoideum (Social amoeba).